The sequence spans 245 residues: 3-deoxy-manno-octulosonate cytidylyltransferase (245 aa).

It belongs to the KdsB family.

The protein resides in the cytoplasm. The enzyme catalyses 3-deoxy-alpha-D-manno-oct-2-ulosonate + CTP = CMP-3-deoxy-beta-D-manno-octulosonate + diphosphate. Its pathway is nucleotide-sugar biosynthesis; CMP-3-deoxy-D-manno-octulosonate biosynthesis; CMP-3-deoxy-D-manno-octulosonate from 3-deoxy-D-manno-octulosonate and CTP: step 1/1. It participates in bacterial outer membrane biogenesis; lipopolysaccharide biosynthesis. In terms of biological role, activates KDO (a required 8-carbon sugar) for incorporation into bacterial lipopolysaccharide in Gram-negative bacteria. The polypeptide is 3-deoxy-manno-octulosonate cytidylyltransferase (Desulfatibacillum aliphaticivorans).